The following is an 853-amino-acid chain: E3 ubiquitin-protein ligase RNF216 (853 aa).

Disordered stretches follow at residues 33–102, 125–152, and 165–228; these read TISD…DDIV, PLEV…ASVD, and PYFQ…AHPL. Residues 53–73 are compositionally biased toward acidic residues; the sequence is QQEDDLDDDVILTEDDSEDEY. Lys-89 participates in a covalent cross-link: Glycyl lysine isopeptide (Lys-Gly) (interchain with G-Cter in SUMO2). Residues Lys-339 and Lys-342 each participate in a glycyl lysine isopeptide (Lys-Gly) (interchain with G-Cter in SUMO2) cross-link. Position 407 is a phosphoserine (Ser-407). Glycyl lysine isopeptide (Lys-Gly) (interchain with G-Cter in SUMO2) cross-links involve residues Lys-413, Lys-418, Lys-436, Lys-447, and Lys-473. Residues 463-479 are a coiled coil; sequence VKQEQEFYEQKIKEMAE. A TRIAD supradomain region spans residues 499–716; that stretch reads QLIECRCCYG…SPGAPCQECS (218 aa). Cys-503, Cys-506, Cys-525, Cys-528, Cys-593, and Cys-596 together coordinate Zn(2+). The segment at 503–552 adopts an RING-type 1 zinc-finger fold; sequence CRCCYGEFPFEELTQCADAHLFCKECLIRYAQEAVFGSGKSELSCMEGSC. An IBR-type zinc finger spans residues 571–636; sequence YKYYERKAEE…LWKEHNGLTC (66 aa). Residue Lys-607 forms a Glycyl lysine isopeptide (Lys-Gly) (interchain with G-Cter in SUMO2) linkage. Positions 611, 616, 621, 624, 631, and 636 each coordinate Zn(2+). Glycyl lysine isopeptide (Lys-Gly) (interchain with G-Cter in SUMO2) cross-links involve residues Lys-646 and Lys-654. Cys-663 and Cys-666 together coordinate Zn(2+). Residues 663–691 form an RING-type 2; atypical zinc finger; it reads CHKCGTGLIKSEGCNRMSCRCGAQMCYLC. The active site involves Cys-676. Positions 681, 683, 688, 691, 704, and 712 each coordinate Zn(2+). A coiled-coil region spans residues 725-751; the sequence is TEDDEKLIEEIQKEAEEEQKRKNGENT. Glycyl lysine isopeptide (Lys-Gly) (interchain with G-Cter in SUMO2) cross-links involve residues Lys-753 and Lys-761.

In terms of assembly, interacts with UBE2L3 and to some extent with UBE2L6. Interacts with TRAF3, TLR3, TLR4, TLR5 and TLR9. Isoform 3/ZIN binds RIPK1. In terms of processing, auto-ubiquitinated. Phosphorylation at Ser-719 enhances acceptor ubiquitin binding and chain-type specificity towards 'Lys-63' di-ubiquitin but not di-ubiquitin with other linkage types.

The protein resides in the cytoplasm. The protein localises to the cytoplasmic vesicle. It localises to the clathrin-coated vesicle. The catalysed reaction is S-ubiquitinyl-[E2 ubiquitin-conjugating enzyme]-L-cysteine + [acceptor protein]-L-lysine = [E2 ubiquitin-conjugating enzyme]-L-cysteine + N(6)-ubiquitinyl-[acceptor protein]-L-lysine.. It functions in the pathway protein modification; protein ubiquitination. Its activity is regulated as follows. Allosterically activated by 'Lys-63'-linked di-ubiquitin. Its function is as follows. E3 ubiquitin ligase which accepts ubiquitin from specific E2 ubiquitin-conjugating enzymes, and then transfers it to substrates promoting their ubiquitination. Plays a role in the regulation of antiviral responses by promoting the degradation of TRAF3, TLR4 and TLR9. In turn, down-regulates NF-kappa-B and IRF3 activation as well as beta interferon production. Also participates in the regulation of autophagy by ubiquitinating BECN1 leading to its degradation and autophagy inhibition. Plays a role in ARC-dependent synaptic plasticity by mediating ARC ubiquitination resulting in its rapid proteasomal degradation. Plays aso an essential role in spermatogenesis and male fertility. Mechanistically, regulates meiosis by promoting the degradation of PRKACB through the ubiquitin-mediated lysosome pathway. Modulates the gonadotropin-releasing hormone signal pathway by affecting the stability of STAU2 that is required for the microtubule-dependent transport of neuronal RNA from the cell body to the dendrite. This chain is E3 ubiquitin-protein ligase RNF216 (Rnf216), found in Mus musculus (Mouse).